The primary structure comprises 139 residues: MKKVLALVVAAAMGLSSAAFAADAVSTTQAPAATHSTAAKTTHHKKHHKAAAKPAAEQKAQAAKKHKKAEAKPAAAQKAQAAKKHKKVAAKPAAPQKAQAAKKHHKAAAKPAAQKAQAAKKHHKTTKHQAAKPTAQPAA.

The first 21 residues, 1-21, serve as a signal peptide directing secretion; sequence MKKVLALVVAAAMGLSSAAFA. Positions 22–80 are excised as a propeptide; sequence ADAVSTTQAPAATHSTAAKTTHHKKHHKAAAKPAAEQKAQAAKKHKKAEAKPAAAQKAQ. Low complexity predominate over residues 27-40; sequence TTQAPAATHSTAAK. Residues 27-139 form a disordered region; that stretch reads TTQAPAATHS…AAKPTAQPAA (113 aa). The segment covering 41–51 has biased composition (basic residues); sequence TTHHKKHHKAA. Composition is skewed to low complexity over residues 52 to 61 and 90 to 99; these read AKPAAEQKAQ and AKPAAPQKAQ. Basic residues predominate over residues 118–130; the sequence is AAKKHHKTTKHQA.

Belongs to the Asr family. Post-translationally, proteolytic processing gives rise to the active protein.

It localises to the periplasm. Required for growth and/or survival at acidic conditions. This is Acid shock protein (asr) from Klebsiella pneumoniae.